A 312-amino-acid chain; its full sequence is Ribosomal RNA small subunit methyltransferase H (312 aa).

S-adenosyl-L-methionine is bound by residues 32 to 34 (AGH), D51, F78, D99, and Q106.

This sequence belongs to the methyltransferase superfamily. RsmH family.

Its subcellular location is the cytoplasm. The catalysed reaction is cytidine(1402) in 16S rRNA + S-adenosyl-L-methionine = N(4)-methylcytidine(1402) in 16S rRNA + S-adenosyl-L-homocysteine + H(+). Its function is as follows. Specifically methylates the N4 position of cytidine in position 1402 (C1402) of 16S rRNA. The protein is Ribosomal RNA small subunit methyltransferase H of Exiguobacterium sibiricum (strain DSM 17290 / CCUG 55495 / CIP 109462 / JCM 13490 / 255-15).